We begin with the raw amino-acid sequence, 465 residues long: E3 ubiquitin-protein ligase parkin (465 aa).

The region spanning 1–76 (MIVFVRFNSS…VHIVQRPWRK (76 aa)) is the Ubiquitin-like domain. At Ser65 the chain carries Phosphoserine; by PINK1. The interval 77-99 (GQEMNATGGDDPRNAAGGCEREP) is disordered. A necessary for PINK1-dependent localization to mitochondria region spans residues 77–237 (GQEMNATGGD…LIATNSRNIT (161 aa)). An RING-type 0; atypical zinc finger spans residues 141-225 (SIYNSFYVYC…PTSDKETSVA (85 aa)). At Thr175 the chain carries Phosphothreonine; by PINK1. The segment at 204–238 (TSAEFFFKCGAHPTSDKETSVALHLIATNSRNITC) is SYT11 binding 1. Residue Thr217 is modified to Phosphothreonine. Positions 234-465 (RNITCITCTD…VCMGDHWFDV (232 aa)) are TRIAD supradomain. Cys238, Cys241, Cys253, His257, Cys260, Cys263, Cys289, Cys293, Cys332, and Cys337 together coordinate Zn(2+). The RING-type 1 zinc-finger motif lies at 238-293 (CITCTDVRSPVLVFQCNSRHVICLDCFHLYCVTRLNDRQFVHDPQLGYSLPCVAGC). Residues 257–293 (HVICLDCFHLYCVTRLNDRQFVHDPQLGYSLPCVAGC) form an SYT11 binding 2 region. An IBR-type zinc finger spans residues 313 to 377 (NRYQQYGAEE…CKEAYHEGEC (65 aa)). Lys349 participates in a covalent cross-link: Glycyl lysine isopeptide (Lys-Gly) (interchain with G-Cter in ISG15). Zn(2+)-binding residues include Cys352, Cys360, Cys365, and Cys368. Residue Lys369 forms a Glycyl lysine isopeptide (Lys-Gly) (interchain with G-Cter in ISG15) linkage. His373 and Cys377 together coordinate Zn(2+). The tract at residues 378–410 (SAVFEASGTTTQAYRVDERAAEQARWEAASKET) is REP. Residues Cys418 and Cys421 each coordinate Zn(2+). The segment at 418–449 (CPRCHVPVEKNGGCMHMKCPQPQCRLEWCWNC) adopts an RING-type 2; atypical zinc-finger fold. Cys431 is a catalytic residue. Zn(2+) is bound by residues Cys436, Cys441, Cys446, Cys449, Cys457, and His461.

It belongs to the RBR family. Parkin subfamily. Forms an E3 ubiquitin ligase complex with UBE2L3 or UBE2L6. Mediates 'Lys-63'-linked polyubiquitination by associating with UBE2V1. Part of a SCF-like complex, consisting of PRKN, CUL1 and FBXW7. Interacts with SNCAIP. Binds to the C2A and C2B domains of SYT11. Interacts and regulates the turnover of SEPTIN5. Part of a complex, including STUB1, HSP70 and GPR37. The amount of STUB1 in the complex increases during ER stress. STUB1 promotes the dissociation of HSP70 from PRKN and GPR37, thus facilitating PRKN-mediated GPR37 ubiquitination. HSP70 transiently associates with unfolded GPR37 and inhibits the E3 activity of PRKN, whereas, STUB1 enhances the E3 activity of PRKN through promotion of dissociation of HSP70 from PRKN-GPR37 complexes. Interacts with PSMD4 and PACRG. Interacts with LRRK2. Interacts with RANBP2. Interacts with SUMO1 but not SUMO2, which promotes nuclear localization and autoubiquitination. Interacts (via first RING-type domain) with AIMP2 (via N-terminus). Interacts with PSMA7 and RNF41. Interacts with PINK1. Forms a complex with PINK1 and PARK7. Interacts with CHPF, the interaction with isoform 2 may facilitate PRKN transport into the mitochondria. Interacts with MFN2 (phosphorylated), promotes PRKN localization in dysfunctional depolarized mitochondria. Interacts with FBXO7; this promotes translocation to dysfunctional depolarized mitochondria. Interacts with ZNF746. Interacts with heat shock protein 70 family members, including HSPA1L, HSPA1A and HSPA8; interaction HSPA1L promotes translocation to damaged mitochondria. Interacts with BAG4 and, to a lesser extent, BAG5; interaction with BAG4 inhibits translocation to damaged mitochondria. Forms a complex with PRKN and PARK7. Interacts with AMBRA1. In terms of processing, ISGylated. Conjugated to ubiquitin-like protein ISG15 upon IFN-beta stimulation. ISGylation positively regulates its E3 ligase activity. Auto-ubiquitinates in an E2-dependent manner leading to its own degradation. Also polyubiquitinated by RNF41 for proteasomal degradation. Post-translationally, S-nitrosylated. The inhibition of PRKN ubiquitin E3 ligase activity by S-nitrosylation could contribute to the degenerative process in PD by impairing the ubiquitination of PRKN substrates. In terms of processing, phosphorylated. Activation requires phosphorylation at Ser-65 by PINK1 and binding to PINK1 phosphorylated ubiquitin. Phosphorylation at Thr-175 by PINK1 and at Thr-217 is important for mitochondrial localization. Highly expressed in the brain including the substantia nigra. Expressed in heart, testis and skeletal muscle. Expression is down-regulated or absent in tumor biopsies, and absent in the brain of PARK2 patients. Overexpression protects dopamine neurons from kainate-mediated apoptosis. Found in serum (at protein level).

The protein resides in the cytoplasm. It is found in the cytosol. The protein localises to the nucleus. It localises to the endoplasmic reticulum. Its subcellular location is the mitochondrion. The protein resides in the mitochondrion outer membrane. It is found in the cell projection. The protein localises to the neuron projection. It localises to the postsynaptic density. Its subcellular location is the presynapse. The catalysed reaction is [E2 ubiquitin-conjugating enzyme]-S-ubiquitinyl-L-cysteine + [acceptor protein]-L-lysine = [E2 ubiquitin-conjugating enzyme]-L-cysteine + [acceptor protein]-N(6)-ubiquitinyl-L-lysine.. The protein operates within protein modification; protein ubiquitination. With respect to regulation, in the autoinhibited state the side chain of Phe-463 inserts into a hydrophobic groove in RING-0, occluding the ubiquitin acceptor site Cys-431, whereas the REP repressor element binds RING-1 and blocks its E2-binding site. Activation of PRKN requires 2 steps: (1) phosphorylation at Ser-65 by PINK1 and (2) binding to phosphorylated ubiquitin, leading to unlock repression of the catalytic Cys-431 by the RING-0 region via an allosteric mechanism and converting PRKN to its fully-active form. According to another report, phosphorylation at Ser-65 by PINK1 is not essential for activation and only binding to phosphorylated ubiquitin is essential to unlock repression. In addition, ISG15 conjugation positively regulates its ubiquitin E3 ligase activity by suppressing the intramolecular interaction that maintains its autoinhibited conformation. Functionally, functions within a multiprotein E3 ubiquitin ligase complex, catalyzing the covalent attachment of ubiquitin moieties onto substrate proteins. Substrates include SYT11 and VDAC1. Other substrates are BCL2, CCNE1, GPR37, RHOT1/MIRO1, MFN1, MFN2, STUB1, SNCAIP, SEPTIN5, TOMM20, USP30, ZNF746, MIRO1 and AIMP2. Mediates monoubiquitination as well as 'Lys-6', 'Lys-11', 'Lys-48'-linked and 'Lys-63'-linked polyubiquitination of substrates depending on the context. Participates in the removal and/or detoxification of abnormally folded or damaged protein by mediating 'Lys-63'-linked polyubiquitination of misfolded proteins such as PARK7: 'Lys-63'-linked polyubiquitinated misfolded proteins are then recognized by HDAC6, leading to their recruitment to aggresomes, followed by degradation. Mediates 'Lys-63'-linked polyubiquitination of a 22 kDa O-linked glycosylated isoform of SNCAIP, possibly playing a role in Lewy-body formation. Mediates monoubiquitination of BCL2, thereby acting as a positive regulator of autophagy. Protects against mitochondrial dysfunction during cellular stress, by acting downstream of PINK1 to coordinate mitochondrial quality control mechanisms that remove and replace dysfunctional mitochondrial components. Depending on the severity of mitochondrial damage and/or dysfunction, activity ranges from preventing apoptosis and stimulating mitochondrial biogenesis to regulating mitochondrial dynamics and eliminating severely damaged mitochondria via mitophagy. Activation and recruitment onto the outer membrane of damaged/dysfunctional mitochondria (OMM) requires PINK1-mediated phosphorylation of both PRKN and ubiquitin. After mitochondrial damage, functions with PINK1 to mediate the decision between mitophagy or preventing apoptosis by inducing either the poly- or monoubiquitination of VDAC1, respectively; polyubiquitination of VDAC1 promotes mitophagy, while monoubiquitination of VDAC1 decreases mitochondrial calcium influx which ultimately inhibits apoptosis. When cellular stress results in irreversible mitochondrial damage, promotes the autophagic degradation of dysfunctional depolarized mitochondria (mitophagy) by promoting the ubiquitination of mitochondrial proteins such as TOMM20, RHOT1/MIRO1, MFN1 and USP30. Preferentially assembles 'Lys-6'-, 'Lys-11'- and 'Lys-63'-linked polyubiquitin chains, leading to mitophagy. The PINK1-PRKN pathway also promotes fission of damaged mitochondria by PINK1-mediated phosphorylation which promotes the PRKN-dependent degradation of mitochondrial proteins involved in fission such as MFN2. This prevents the refusion of unhealthy mitochondria with the mitochondrial network or initiates mitochondrial fragmentation facilitating their later engulfment by autophagosomes. Regulates motility of damaged mitochondria via the ubiquitination and subsequent degradation of MIRO1 and MIRO2; in motor neurons, this likely inhibits mitochondrial intracellular anterograde transport along the axons which probably increases the chance of the mitochondria undergoing mitophagy in the soma. Involved in mitochondrial biogenesis via the 'Lys-48'-linked polyubiquitination of transcriptional repressor ZNF746/PARIS which leads to its subsequent proteasomal degradation and allows activation of the transcription factor PPARGC1A. Limits the production of reactive oxygen species (ROS). Regulates cyclin-E during neuronal apoptosis. In collaboration with CHPF isoform 2, may enhance cell viability and protect cells from oxidative stress. Independently of its ubiquitin ligase activity, protects from apoptosis by the transcriptional repression of p53/TP53. May protect neurons against alpha synuclein toxicity, proteasomal dysfunction, GPR37 accumulation, and kainate-induced excitotoxicity. May play a role in controlling neurotransmitter trafficking at the presynaptic terminal and in calcium-dependent exocytosis. May represent a tumor suppressor gene. The sequence is that of E3 ubiquitin-protein ligase parkin from Homo sapiens (Human).